Consider the following 344-residue polypeptide: Protein BIM1 (344 aa).

The residue at position 2 (Ser-2) is an N-acetylserine. The 102-residue stretch at 6 to 107 (GESRTELLTW…FLQWLKKHWI (102 aa)) folds into the Calponin-homology (CH) domain. The segment at 126–173 (IITNNSATKPRTVSNPTTAKRSSSTGTGSAMSGGLATRHSSLGINGSR) is disordered. The segment covering 127–146 (ITNNSATKPRTVSNPTTAKR) has biased composition (polar residues). Over residues 147–159 (SSSTGTGSAMSGG) the composition is skewed to low complexity. Position 157 is a phosphoserine (Ser-157). A compositionally biased stretch (polar residues) spans 163–173 (RHSSLGINGSR). Residues 188–281 (ELTKSQETIG…LYATAEGFEM (94 aa)) form the EB1 C-terminal domain. Residues 292-312 (NLGEHGTVPNQGGYANSNGEV) are disordered.

The protein belongs to the MAPRE family.

Its subcellular location is the cytoplasm. The protein localises to the cytoskeleton. In terms of biological role, binds microtubules. The chain is Protein BIM1 (BIM1) from Saccharomyces cerevisiae (strain ATCC 204508 / S288c) (Baker's yeast).